Reading from the N-terminus, the 669-residue chain is PAN2-PAN3 deadenylation complex subunit PAN3 (669 aa).

A compositionally biased stretch (polar residues) spans 1 to 10 (MATTFGSPSG). Residues 1–25 (MATTFGSPSGDSRRGVASPRPKGRE) are disordered. A C3H1-type zinc finger spans residues 25–54 (EAKNTFCRNVTIYGHCRYENSKCRPPHLPD). The tract at residues 247-519 (QVMPNSTLPV…DIDNFLGGIS (273 aa)) is pseudokinase domain. ATP-binding positions include arginine 298, 347 to 354 (DYHPNSKS), and 408 to 409 (SK). The stretch at 520–558 (DQLASVFDSELHAQDTLTNTLGRELESSRIVRLLVKLNM) forms a coiled coil. Positions 559–669 (VNERPELDAS…LIRAGRGQGK (111 aa)) are knob domain.

Belongs to the protein kinase superfamily. PAN3 family. As to quaternary structure, homodimer. Forms a heterotrimer with a catalytic subunit PAN2 to form the poly(A)-nuclease (PAN) deadenylation complex. Interacts (via PAM-2 motif) with poly(A)-binding protein PAB1 (via PABC domain), conferring substrate specificity of the enzyme complex.

It is found in the cytoplasm. Regulatory subunit of the poly(A)-nuclease (PAN) deadenylation complex, one of two cytoplasmic mRNA deadenylases involved in mRNA turnover. PAN specifically shortens poly(A) tails of RNA and the activity is stimulated by poly(A)-binding protein PAB1. PAN deadenylation is followed by rapid degradation of the shortened mRNA tails by the CCR4-NOT complex. Deadenylated mRNAs are then degraded by two alternative mechanisms, namely exosome-mediated 3'-5' exonucleolytic degradation, or deadenylation-dependent mRNA decaping and subsequent 5'-3' exonucleolytic degradation by XRN1. May also be involved in post-transcriptional maturation of mRNA poly(A) tails. PAN3 acts as a positive regulator for PAN activity, recruiting the catalytic subunit PAN2 to mRNA via its interaction with RNA and with PAB1. The chain is PAN2-PAN3 deadenylation complex subunit PAN3 from Phaeosphaeria nodorum (strain SN15 / ATCC MYA-4574 / FGSC 10173) (Glume blotch fungus).